The primary structure comprises 951 residues: Valine--tRNA ligase (951 aa).

A 'HIGH' region motif is present at residues 42–52 (PNVTGSLHMGH). The 'KMSKS' region motif lies at 554 to 558 (KMSKS). Position 557 (K557) interacts with ATP. Residues 880 to 944 (AGLINKEDEL…AEAKAKLIEQ (65 aa)) adopt a coiled-coil conformation.

The protein belongs to the class-I aminoacyl-tRNA synthetase family. ValS type 1 subfamily. As to quaternary structure, monomer.

The protein localises to the cytoplasm. It catalyses the reaction tRNA(Val) + L-valine + ATP = L-valyl-tRNA(Val) + AMP + diphosphate. Catalyzes the attachment of valine to tRNA(Val). As ValRS can inadvertently accommodate and process structurally similar amino acids such as threonine, to avoid such errors, it has a 'posttransfer' editing activity that hydrolyzes mischarged Thr-tRNA(Val) in a tRNA-dependent manner. The protein is Valine--tRNA ligase of Shigella flexneri.